The primary structure comprises 611 residues: Dihydroxy-acid dehydratase (611 aa).

Residue Asp81 participates in Mg(2+) binding. Cys122 contributes to the [2Fe-2S] cluster binding site. Positions 123 and 124 each coordinate Mg(2+). Lys124 bears the N6-carboxylysine mark. Position 195 (Cys195) interacts with [2Fe-2S] cluster. Glu491 is a binding site for Mg(2+). Ser517 acts as the Proton acceptor in catalysis.

It belongs to the IlvD/Edd family. In terms of assembly, homodimer. [2Fe-2S] cluster is required as a cofactor. The cofactor is Mg(2+).

It carries out the reaction (2R)-2,3-dihydroxy-3-methylbutanoate = 3-methyl-2-oxobutanoate + H2O. The catalysed reaction is (2R,3R)-2,3-dihydroxy-3-methylpentanoate = (S)-3-methyl-2-oxopentanoate + H2O. It functions in the pathway amino-acid biosynthesis; L-isoleucine biosynthesis; L-isoleucine from 2-oxobutanoate: step 3/4. Its pathway is amino-acid biosynthesis; L-valine biosynthesis; L-valine from pyruvate: step 3/4. Functionally, functions in the biosynthesis of branched-chain amino acids. Catalyzes the dehydration of (2R,3R)-2,3-dihydroxy-3-methylpentanoate (2,3-dihydroxy-3-methylvalerate) into 2-oxo-3-methylpentanoate (2-oxo-3-methylvalerate) and of (2R)-2,3-dihydroxy-3-methylbutanoate (2,3-dihydroxyisovalerate) into 2-oxo-3-methylbutanoate (2-oxoisovalerate), the penultimate precursor to L-isoleucine and L-valine, respectively. The sequence is that of Dihydroxy-acid dehydratase from Glaesserella parasuis serovar 5 (strain SH0165) (Haemophilus parasuis).